Here is a 255-residue protein sequence, read N- to C-terminus: Imidazole glycerol phosphate synthase subunit HisF (255 aa).

Residues aspartate 12 and aspartate 131 contribute to the active site.

This sequence belongs to the HisA/HisF family. As to quaternary structure, heterodimer of HisH and HisF.

It localises to the cytoplasm. It carries out the reaction 5-[(5-phospho-1-deoxy-D-ribulos-1-ylimino)methylamino]-1-(5-phospho-beta-D-ribosyl)imidazole-4-carboxamide + L-glutamine = D-erythro-1-(imidazol-4-yl)glycerol 3-phosphate + 5-amino-1-(5-phospho-beta-D-ribosyl)imidazole-4-carboxamide + L-glutamate + H(+). Its pathway is amino-acid biosynthesis; L-histidine biosynthesis; L-histidine from 5-phospho-alpha-D-ribose 1-diphosphate: step 5/9. IGPS catalyzes the conversion of PRFAR and glutamine to IGP, AICAR and glutamate. The HisF subunit catalyzes the cyclization activity that produces IGP and AICAR from PRFAR using the ammonia provided by the HisH subunit. The sequence is that of Imidazole glycerol phosphate synthase subunit HisF from Neisseria meningitidis serogroup C / serotype 2a (strain ATCC 700532 / DSM 15464 / FAM18).